The chain runs to 1367 residues: Phospholipid-transporting ATPase C4F10.16c (1367 aa).

Residues 1–154 lie on the Cytoplasmic side of the membrane; it reads MPSLINFDAI…PKNLWNQFKN (154 aa). Positions 34-104 are disordered; sequence HNGSLAHEGP…KKNEAGTESG (71 aa). Basic and acidic residues predominate over residues 50 to 70; the sequence is SSRHHESQFSQEAHAEQRSRD. The span at 77-92 shows a compositional bias: polar residues; the sequence is FEGSCNNSDQSWTSRV. The helical transmembrane segment at 155–172 threads the bilayer; sequence IANAFFLFVTLLQCIPLF. Topologically, residues 173-177 are lumenal; the sequence is CPEHL. Residues 178 to 197 traverse the membrane as a helical segment; sequence GLSFIPLSVILLTTAIKDGI. At 198 to 482 the chain is on the cytoplasmic side; sequence EDYRRCVLDK…PSKRSRITRD (285 aa). The chain crosses the membrane as a helical span at residues 483–503; it reads LNWTIILNFLLLFAMCLFSGV. The Lumenal portion of the chain corresponds to 504–531; the sequence is LRSIYSAQNNSARVFELSKNSNTAPAHG. Residues 532 to 552 form a helical membrane-spanning segment; that stretch reads IISIFTSLILFQNLVPISLYI. The Cytoplasmic segment spans residues 553–1091; that stretch reads TMDIVRSIQS…GRWDYKRMSQ (539 aa). Catalysis depends on Asp-600, which acts as the 4-aspartylphosphate intermediate. ATP is bound by residues Asp-600, Lys-601, Thr-602, Glu-724, Phe-765, Ser-767, Lys-770, Lys-788, Arg-822, Thr-823, Thr-902, Gly-903, Asp-904, Arg-1009, and Lys-1015. Asp-600 provides a ligand contact to Mg(2+). Thr-602 contacts Mg(2+). Residue Asp-1035 participates in Mg(2+) binding. 2 residues coordinate ATP: Asn-1038 and Asp-1039. Position 1039 (Asp-1039) interacts with Mg(2+). The helical transmembrane segment at 1092-1112 threads the bilayer; sequence MISFFFYKNVIWTFILFWYQF. Residues 1113–1124 are Lumenal-facing; sequence YNEFDGNYIFDY. The helical transmembrane segment at 1125–1145 threads the bilayer; the sequence is TYVMLFNLLFTSLPVIIAGCF. Over 1146–1174 the chain is Cytoplasmic; it reads DQDVDASVSMKNPSLYQRGILGLEWNGKR. Residues 1175–1197 traverse the membrane as a helical segment; that stretch reads FWSYMLDGIYQSLVCFGVALFVF. At 1198 to 1212 the chain is on the lumenal side; the sequence is KFGDFVSWTGRNIEC. Residues 1213–1233 form a helical membrane-spanning segment; sequence IEDIGLFISSPTIFVINIFIL. Over 1234–1240 the chain is Cytoplasmic; that stretch reads MNQERLN. A helical membrane pass occupies residues 1241–1261; sequence LISLITWMFSIGVFWIWTFIY. Topologically, residues 1262-1276 are lumenal; the sequence is SEVGPSYAFHKSASR. Residues 1277–1297 form a helical membrane-spanning segment; it reads TCQTFGFWCVTVLTIALCLLP. A 1,2-diacyl-sn-glycero-3-phospho-L-serine is bound at residue Arg-1298. Residues 1298-1367 are Cytoplasmic-facing; the sequence is RFSYICLQKL…TSVSFDDSNK (70 aa).

This sequence belongs to the cation transport ATPase (P-type) (TC 3.A.3) family. Type IV subfamily. Requires Mg(2+) as cofactor.

The protein localises to the cell membrane. It localises to the endoplasmic reticulum membrane. It catalyses the reaction ATP + H2O + phospholipidSide 1 = ADP + phosphate + phospholipidSide 2.. The enzyme catalyses a 1,2-diacyl-sn-glycero-3-phosphoethanolamine(out) + ATP + H2O = a 1,2-diacyl-sn-glycero-3-phosphoethanolamine(in) + ADP + phosphate + H(+). It carries out the reaction a 1,2-diacyl-sn-glycero-3-phosphocholine(out) + ATP + H2O = a 1,2-diacyl-sn-glycero-3-phosphocholine(in) + ADP + phosphate + H(+). The catalysed reaction is a beta-D-glucosyl-(1&lt;-&gt;1')-N-acylsphing-4-enine(out) + ATP + H2O = a beta-D-glucosyl-(1&lt;-&gt;1')-N-acylsphing-4-enine(in) + ADP + phosphate + H(+). It catalyses the reaction a 1,2-diacyl-sn-glycero-3-phospho-L-serine(out) + ATP + H2O = a 1,2-diacyl-sn-glycero-3-phospho-L-serine(in) + ADP + phosphate + H(+). In terms of biological role, catalytic component of a P4-ATPase flippase complex which catalyzes the hydrolysis of ATP coupled to the transport of glucosylceramide, phosphatidylcholine, phosphatidylethanolamine, and small amounts of phosphatidylserine from the lumenal to the cytosolic leaflet of the cell membrane and ensures the maintenance of asymmetric distribution of phospholipids. The chain is Phospholipid-transporting ATPase C4F10.16c from Schizosaccharomyces pombe (strain 972 / ATCC 24843) (Fission yeast).